A 361-amino-acid polypeptide reads, in one-letter code: 5-formaminoimidazole-4-carboxamide-1-(beta)-D-ribofuranosyl 5'-monophosphate synthetase (361 aa).

H27 and S94 together coordinate 5-amino-1-(5-phospho-beta-D-ribosyl)imidazole-4-carboxamide. In terms of domain architecture, ATP-grasp spans 116–348; that stretch reads RAILRWEAER…MGQRIAREIK (233 aa). Residues 146-208 and E230 each bind ATP; that span reads PDDI…ANYC. Residue N258 participates in 5-amino-1-(5-phospho-beta-D-ribosyl)imidazole-4-carboxamide binding. Mg(2+) is bound by residues Q297 and E310.

It belongs to the phosphohexose mutase family. Mg(2+) serves as cofactor. It depends on Mn(2+) as a cofactor.

The enzyme catalyses 5-amino-1-(5-phospho-beta-D-ribosyl)imidazole-4-carboxamide + formate + ATP = 5-formamido-1-(5-phospho-D-ribosyl)imidazole-4-carboxamide + ADP + phosphate. It participates in purine metabolism; IMP biosynthesis via de novo pathway; 5-formamido-1-(5-phospho-D-ribosyl)imidazole-4-carboxamide from 5-amino-1-(5-phospho-D-ribosyl)imidazole-4-carboxamide (formate route): step 1/1. Catalyzes the ATP- and formate-dependent formylation of 5-aminoimidazole-4-carboxamide-1-beta-d-ribofuranosyl 5'-monophosphate (AICAR) to 5-formaminoimidazole-4-carboxamide-1-beta-d-ribofuranosyl 5'-monophosphate (FAICAR) in the absence of folates. The sequence is that of 5-formaminoimidazole-4-carboxamide-1-(beta)-D-ribofuranosyl 5'-monophosphate synthetase from Methanococcus maripaludis (strain C7 / ATCC BAA-1331).